A 483-amino-acid polypeptide reads, in one-letter code: Arginine/agmatine antiporter (483 aa).

The next 12 helical transmembrane spans lie at 11 to 33, 48 to 70, 90 to 112, 127 to 149, 156 to 178, 209 to 228, 241 to 263, 293 to 315, 335 to 357, 367 to 389, 415 to 435, and 458 to 477; these read ILGT…IFSL, LAWM…LSII, VGFT…YAVI, GGNT…YIVL, SFVN…LITA, TMLV…VISG, ILGF…GSLF, TGLL…EIPY, APSF…VYFS, ITGV…FSLS, LWLI…LLAL, and EILK…FLFS.

It belongs to the amino acid-polyamine-organocation (APC) superfamily. Basic amino acid/polyamine antiporter (APA) (TC 2.A.3.2) family.

It localises to the cell inner membrane. Functionally, catalyzes the exchange of L-arginine for agmatine. The arginine uptake by the bacterium in the macrophage may be a virulence factor against the host innate immune response. The sequence is that of Arginine/agmatine antiporter (aaxC) from Chlamydia trachomatis serovar L2 (strain ATCC VR-902B / DSM 19102 / 434/Bu).